A 259-amino-acid chain; its full sequence is Malonyl-[acyl-carrier protein] O-methyltransferase 2 (259 aa).

This sequence belongs to the methyltransferase superfamily.

It catalyses the reaction malonyl-[ACP] + S-adenosyl-L-methionine = malonyl-[ACP] methyl ester + S-adenosyl-L-homocysteine. Its pathway is cofactor biosynthesis; biotin biosynthesis. Converts the free carboxyl group of a malonyl-thioester to its methyl ester by transfer of a methyl group from S-adenosyl-L-methionine (SAM). It allows to synthesize pimeloyl-ACP via the fatty acid synthetic pathway. This is Malonyl-[acyl-carrier protein] O-methyltransferase 2 from Ilyobacter polytropus (strain ATCC 51220 / DSM 2926 / LMG 16218 / CuHBu1).